The following is a 430-amino-acid chain: Putative aspergillopepsin A-like aspartic endopeptidase MCYG_07979 (430 aa).

The N-terminal stretch at 1–17 is a signal peptide; it reads MHLSSLLVAVLLPLALS. A propeptide spans 18-87 (activation peptide); sequence KPTPRKKPGS…SKIAGGAPGA (70 aa). Residues 59-105 form a disordered region; the sequence is STQGMDGYRPEPISRFQGNSKIAGGAPGAKDDGKDEKGEVENNPTSH. The segment covering 87–98 has biased composition (basic and acidic residues); the sequence is AKDDGKDEKGEV. In terms of domain architecture, Peptidase A1 spans 109–427; it reads FLSPVTIGGQ…DYRGPSVSLA (319 aa). Residue Asp-125 is part of the active site. Asn-306 carries N-linked (GlcNAc...) asparagine glycosylation. Asp-314 is a catalytic residue. The N-linked (GlcNAc...) asparagine glycan is linked to Asn-352.

Belongs to the peptidase A1 family.

The protein localises to the secreted. This chain is Putative aspergillopepsin A-like aspartic endopeptidase MCYG_07979, found in Arthroderma otae (strain ATCC MYA-4605 / CBS 113480) (Microsporum canis).